Consider the following 758-residue polypeptide: Vitamin K-dependent gamma-carboxylase (758 aa).

Positions 1 to 29 (MAVHRGSARAAPASDKVQKNKPAQTSGLE) are disordered. Position 2 is an N-acetylalanine (A2). Residues 2–60 (AVHRGSARAAPASDKVQKNKPAQTSGLEQGSRMARIFGFEWADLSSWQSVVTLLNRPTD) lie on the Cytoplasmic side of the membrane. Residues 61–81 (PANLAVFRFLFAFLMLLDIPQ) form a helical membrane-spanning segment. Residues 82 to 113 (ERGLSSLDRKYLDGLDVCRFPLLDALRPLPLD) lie on the Lumenal side of the membrane. C99 and C450 form a disulfide bridge. The chain crosses the membrane as a helical span at residues 114 to 134 (WMYLVYTIMFLGALGMMLGLW). Over 135–136 (YR) the chain is Cytoplasmic. Residues 137 to 157 (LSCMLFLLPYWYVFLLDKTSW) form a helical membrane-spanning segment. The Lumenal segment spans residues 158–292 (NNHSYLYGLL…VSYFHCMNSQ (135 aa)). A helical membrane pass occupies residues 293 to 313 (LFSIGMFPYVMLASSPLFCSA). The Cytoplasmic segment spans residues 314-361 (EWPRKLVARCPKRLQELLPAKAAPRPSASCVYKRARAKAGQKPGLRHH). The helical transmembrane segment at 362–382 (LGTVFTLLYLLEQLFLPYSHF) threads the bilayer. Residues 383–758 (LTQGYNNWTN…PDSEHVHSEL (376 aa)) are Lumenal-facing. The segment at 727 to 758 (PFEPVDESSASNTDSSDPHPSEPDSEHVHSEL) is disordered. The span at 742-758 (SDPHPSEPDSEHVHSEL) shows a compositional bias: basic and acidic residues.

This sequence belongs to the vitamin K-dependent gamma-carboxylase family. Monomer. Interacts with CALU.

Its subcellular location is the endoplasmic reticulum membrane. The catalysed reaction is 4-carboxy-L-glutamyl-[protein] + 2,3-epoxyphylloquinone + H2O + H(+) = phylloquinol + L-glutamyl-[protein] + CO2 + O2. Mediates the vitamin K-dependent carboxylation of glutamate residues to calcium-binding gamma-carboxyglutamate (Gla) residues with the concomitant conversion of the reduced hydroquinone form of vitamin K to vitamin K epoxide. Catalyzes gamma-carboxylation of various proteins, such as blood coagulation factors (F2, F7, F9 and F10), osteocalcin (BGLAP) or matrix Gla protein (MGP). The chain is Vitamin K-dependent gamma-carboxylase (Ggcx) from Rattus norvegicus (Rat).